We begin with the raw amino-acid sequence, 368 residues long: MWPLWRLVSLLALSQALPFEQRGFWDFTLDDGPFMMNDEEASGADTSGVLDPDSVTPTYSAMCPFGCHCHLRVVQCSDLGLKSVPKEISPDTTLLDLQNNDISELRKDDFKGLQHLYALVLVNNKISKIHEKAFSPLRKLQKLYISKNHLVEIPPNLPSSLVELRIHDNRIRKVPKGVFSGLRNMNCIEMGGNPLENSGFEPGAFDGLKLNYLRISEAKLTGIPKDLPETLNELHLDHNKIQAIELEDLLRYSKLYRLGLGHNQIRMIENGSLSFLPTLRELHLDNNKLARVPSGLPDLKLLQVVYLHSNNITKVGVNDFCPMGFGVKRAYYNGISLFNNPVPYWEVQPATFRCVTDRLAIQFGNYKK.

A signal peptide spans 1 to 16 (MWPLWRLVSLLALSQA). Residues 17-37 (LPFEQRGFWDFTLDDGPFMMN) constitute a propeptide that is removed on maturation. 2 O-linked (Xyl...) (glycosaminoglycan) serine glycosylation sites follow: Ser-42 and Ser-47. 2 cysteine pairs are disulfide-bonded: Cys-63/Cys-69 and Cys-67/Cys-76. LRR repeat units follow at residues 82 to 102 (KSVPKEISPDTTLLDLQNNDI), 103 to 126 (SELRKDDFKGLQHLYALVLVNNKI), 127 to 150 (SKIHEKAFSPLRKLQKLYISKNHL), 151 to 171 (VEIPPNLPSSLVELRIHDNRI), 172 to 195 (RKVPKGVFSGLRNMNCIEMGGNPL), 196 to 220 (ENSGFEPGAFDGLKLNYLRISEAKL), 221 to 241 (TGIPKDLPETLNELHLDHNKI), 242 to 265 (QAIELEDLLRYSKLYRLGLGHNQI), 266 to 289 (RMIENGSLSFLPTLRELHLDNNKL), 290 to 312 (ARVPSGLPDLKLLQVVYLHSNNI), 313 to 342 (TKVGVNDFCPMGFGVKRAYYNGISLFNNPV), and 343 to 368 (PYWEVQPATFRCVTDRLAIQFGNYKK). O-linked (Xyl...) (glycosaminoglycan) serine glycosylation is found at Ser-180 and Ser-198. 2 N-linked (GlcNAc...) asparagine glycosylation sites follow: Asn-270 and Asn-311. Cys-321 and Cys-354 are disulfide-bonded.

This sequence belongs to the small leucine-rich proteoglycan (SLRP) family. SLRP class I subfamily. Homodimer. Forms a ternary complex with MFAP2 and ELN. The two attached glycosaminoglycan chains can be either chondroitin sulfate or dermatan sulfate. In terms of tissue distribution, detected in placenta (at protein level). Found in several connective tissues, especially in articular cartilages.

The protein localises to the secreted. It localises to the extracellular space. Its subcellular location is the extracellular matrix. Its function is as follows. May be involved in collagen fiber assembly. In Homo sapiens (Human), this protein is Biglycan (BGN).